We begin with the raw amino-acid sequence, 215 residues long: Proteasome subunit beta (215 aa).

A propeptide spans 1–12 (MLGEIQDKVYKG) (removed in mature form; by autocatalysis). Residue Thr-13 is the Nucleophile of the active site.

Belongs to the peptidase T1B family. In terms of assembly, the 20S proteasome core is composed of 14 alpha and 14 beta subunits that assemble into four stacked heptameric rings, resulting in a barrel-shaped structure. The two inner rings, each composed of seven catalytic beta subunits, are sandwiched by two outer rings, each composed of seven alpha subunits. The catalytic chamber with the active sites is on the inside of the barrel. Has a gated structure, the ends of the cylinder being occluded by the N-termini of the alpha-subunits. Is capped at one or both ends by the proteasome regulatory ATPase, PAN.

It is found in the cytoplasm. The enzyme catalyses Cleavage of peptide bonds with very broad specificity.. With respect to regulation, the formation of the proteasomal ATPase PAN-20S proteasome complex, via the docking of the C-termini of PAN into the intersubunit pockets in the alpha-rings, triggers opening of the gate for substrate entry. Interconversion between the open-gate and close-gate conformations leads to a dynamic regulation of the 20S proteasome proteolysis activity. Its function is as follows. Component of the proteasome core, a large protease complex with broad specificity involved in protein degradation. The protein is Proteasome subunit beta of Archaeoglobus profundus (strain DSM 5631 / JCM 9629 / NBRC 100127 / Av18).